A 300-amino-acid chain; its full sequence is Acetylglutamate kinase (300 aa).

Residues 72–73, arginine 94, and asparagine 197 contribute to the substrate site; that span reads GG.

It belongs to the acetylglutamate kinase family. ArgB subfamily.

It localises to the cytoplasm. The enzyme catalyses N-acetyl-L-glutamate + ATP = N-acetyl-L-glutamyl 5-phosphate + ADP. Its pathway is amino-acid biosynthesis; L-arginine biosynthesis; N(2)-acetyl-L-ornithine from L-glutamate: step 2/4. Catalyzes the ATP-dependent phosphorylation of N-acetyl-L-glutamate. The polypeptide is Acetylglutamate kinase (Aromatoleum aromaticum (strain DSM 19018 / LMG 30748 / EbN1) (Azoarcus sp. (strain EbN1))).